The following is an 84-amino-acid chain: UPF0473 protein CPF_2030 (84 aa).

The protein belongs to the UPF0473 family.

The chain is UPF0473 protein CPF_2030 from Clostridium perfringens (strain ATCC 13124 / DSM 756 / JCM 1290 / NCIMB 6125 / NCTC 8237 / Type A).